The sequence spans 130 residues: Fluoride-specific ion channel FluC (130 aa).

Helical transmembrane passes span 4–24 (MINV…RYFI), 35–55 (GFPI…GLLT), 68–88 (LNLF…TFSL), and 99–119 (AVFG…GVVL). Na(+)-binding residues include Gly-78 and Thr-81.

The protein belongs to the fluoride channel Fluc/FEX (TC 1.A.43) family.

The protein resides in the cell membrane. The enzyme catalyses fluoride(in) = fluoride(out). Its activity is regulated as follows. Na(+) is not transported, but it plays an essential structural role and its presence is essential for fluoride channel function. Fluoride-specific ion channel. Important for reducing fluoride concentration in the cell, thus reducing its toxicity. The chain is Fluoride-specific ion channel FluC from Ruminiclostridium cellulolyticum (strain ATCC 35319 / DSM 5812 / JCM 6584 / H10) (Clostridium cellulolyticum).